The sequence spans 502 residues: Actin nucleation-promoting factor WAS (502 aa).

The region spanning 39–148 (LGRKCLTLAT…ALVQEKIQKR (110 aa)) is the WH1 domain. The segment at 146 to 240 (QKRNQRQSGD…KKISKADIGA (95 aa)) is disordered. Polar residues predominate over residues 201-211 (DIQNPDITSSR). A Phosphoserine modification is found at serine 221. The CRIB domain maps to 238–251 (IGAPSGFKHVSHVG). Tyrosine 291 carries the post-translational modification Phosphotyrosine; by FYN and HCK. A disordered region spans residues 307-502 (MRRQEPLPPP…DEDEDDEWDD (196 aa)). GRSGPLPPXP motif repeat units follow at residues 337–346 (GRSGPLPPVP) and 376–385 (GRSGPLPPPP). Over residues 341 to 419 (PLPPVPLGIA…PAPPPLPPAL (79 aa)) the composition is skewed to pro residues. Residues 430 to 447 (GRGALLDQIRQGIQLNKT) enclose the WH2 domain. A phosphoserine; by CK2 mark is found at serine 483 and serine 484. The span at 486 to 502 (EGEDQAGDEDEDDEWDD) shows a compositional bias: acidic residues.

Binds the Arp2/3 complex. Interacts with CDC42, RAC, NCK, HCK, FYN, SRC kinase FGR, BTK, ABL1, PSTPIP1, WIP, and to the p85 subunit of PLC-gamma. Interacts (via C-terminus) with ALDOA. Interacts with NCK1 (via SH3 domains). Interacts with FCHSD2. In terms of assembly, (Microbial infection) Interacts with E.coli effector protein EspF(U). Post-translationally, phosphorylated at Tyr-291 by FYN and HCK, inducing WAS effector activity after TCR engagement. Phosphorylation at Tyr-291 enhances WAS activity in promoting actin polymerization and filopodia formation. Expressed predominantly in the thymus. Also found, to a much lesser extent, in the spleen.

The protein resides in the cytoplasm. The protein localises to the cytoskeleton. It is found in the nucleus. Its function is as follows. Effector protein for Rho-type GTPases that regulates actin filament reorganization via its interaction with the Arp2/3 complex. Important for efficient actin polymerization. Possible regulator of lymphocyte and platelet function. Mediates actin filament reorganization and the formation of actin pedestals upon infection by pathogenic bacteria. In addition to its role in the cytoplasmic cytoskeleton, also promotes actin polymerization in the nucleus, thereby regulating gene transcription and repair of damaged DNA. Promotes homologous recombination (HR) repair in response to DNA damage by promoting nuclear actin polymerization, leading to drive motility of double-strand breaks (DSBs). The protein is Actin nucleation-promoting factor WAS (WAS) of Homo sapiens (Human).